Here is a 469-residue protein sequence, read N- to C-terminus: Protein translocase subunit SecY (469 aa).

Residues 1-20 (MSFIDSLATLGQYLPAVTKP) are Cytoplasmic-facing. The chain crosses the membrane as a helical span at residues 21-47 (KEKPSLGQKLVWSLVAVIIYLIMASTP). The Extracellular segment spans residues 48 to 59 (LYGITSASFFKN). Residues 60 to 67 (LILEQIIF) constitute an intramembrane region (helical). Residues 60-88 (LILEQIIFASTTGTLAQLGIGPIITAGLI) traverse the membrane as a discontinuously helical segment. An intramembrane segment occupies 68–79 (ASTTGTLAQLGI). Residues 80-88 (GPIITAGLI) constitute an intramembrane region (helical). Residues 89 to 109 (MQILAGSKLISIDLNDPDDRV) are Cytoplasmic-facing. Residues 110-131 (KFTEAQKGLAFIFILVESALFG) form a helical membrane-spanning segment. At 132–146 (YVLARTSTTINASIL) the chain is on the extracellular side. A helical membrane pass occupies residues 147–171 (FIAGIVIAQLIVATYLILLLDELIQ). Residues 172–178 (KGWGLGS) lie on the Cytoplasmic side of the membrane. Residues 179–197 (GVSLFILAGVMKIMFWDMF) traverse the membrane as a helical segment. Topologically, residues 198–240 (GIASVSSQNLPIGFFPALFTALASHSDVLNLIVNTSTKNLFQP) are extracellular. Residues 241-262 (DLVGLVTTIALIIITIYLTTMT) traverse the membrane as a helical segment. Over 263–287 (IEIPVTSQKLRGIRRTIPLNFLYVS) the chain is Cytoplasmic. A helical membrane pass occupies residues 288–309 (SIPVIFVAVLGSDIQLFASLAS). The Extracellular segment spans residues 310 to 347 (YVSPSASNILNTVSGVFFFPPPNSAIPHSIYAVVLDPL). Residues 348 to 367 (GALEYAVVFIVLSILFGILW) traverse the membrane as a helical segment. Residues 368 to 410 (VDVAGLDPATQAQQLVEAGIEIPGVRNNPKIIEGILARYIYPL) are Cytoplasmic-facing. Residues 411 to 429 (AFFSSIIVGLIAVFATLLG) form a helical membrane-spanning segment. Residues 430–432 (AYG) are Extracellular-facing. Residues 433–447 (TGIGILLAVTIAIQY) traverse the membrane as a helical segment. Residues 448 to 469 (YSLLAYERSLEMYPLLKRLIGE) lie on the Cytoplasmic side of the membrane.

This sequence belongs to the SecY/SEC61-alpha family. In terms of assembly, component of the Sec protein translocase complex. Heterotrimer consisting of alpha (SecY), beta (SecG) and gamma (SecE) subunits. The heterotrimers can form oligomers, although 1 heterotrimer is thought to be able to translocate proteins. Interacts with the ribosome. May interact with SecDF, and other proteins may be involved.

The protein localises to the cell membrane. In terms of biological role, the central subunit of the protein translocation channel SecYEG. Consists of two halves formed by TMs 1-5 and 6-10. These two domains form a lateral gate at the front which open onto the bilayer between TMs 2 and 7, and are clamped together by SecE at the back. The channel is closed by both a pore ring composed of hydrophobic SecY resides and a short helix (helix 2A) on the extracellular side of the membrane which forms a plug. The plug probably moves laterally to allow the channel to open. The ring and the pore may move independently. In Saccharolobus solfataricus (strain ATCC 35092 / DSM 1617 / JCM 11322 / P2) (Sulfolobus solfataricus), this protein is Protein translocase subunit SecY.